Reading from the N-terminus, the 65-residue chain is UPF0434 protein RPD_0454 (65 aa).

This sequence belongs to the UPF0434 family.

This is UPF0434 protein RPD_0454 from Rhodopseudomonas palustris (strain BisB5).